We begin with the raw amino-acid sequence, 264 residues long: Triosephosphate isomerase (264 aa).

13–15 lines the substrate pocket; that stretch reads NWK. Histidine 106 serves as the catalytic Electrophile. Residue glutamate 179 is the Proton acceptor of the active site. Substrate is bound by residues glycine 185, serine 223, and 244 to 245; that span reads GG.

It belongs to the triosephosphate isomerase family. Homodimer.

It localises to the cytoplasm. It catalyses the reaction D-glyceraldehyde 3-phosphate = dihydroxyacetone phosphate. It participates in carbohydrate biosynthesis; gluconeogenesis. It functions in the pathway carbohydrate degradation; glycolysis; D-glyceraldehyde 3-phosphate from glycerone phosphate: step 1/1. Involved in the gluconeogenesis. Catalyzes stereospecifically the conversion of dihydroxyacetone phosphate (DHAP) to D-glyceraldehyde-3-phosphate (G3P). The chain is Triosephosphate isomerase from Acinetobacter baumannii (strain SDF).